A 427-amino-acid chain; its full sequence is Serine--tRNA ligase (427 aa).

An L-serine-binding site is contributed by 231-233 (TAE). Position 262–264 (262–264 (RSE)) interacts with ATP. Residue E285 coordinates L-serine. 349–352 (EISS) is an ATP binding site. Residue S385 participates in L-serine binding.

It belongs to the class-II aminoacyl-tRNA synthetase family. Type-1 seryl-tRNA synthetase subfamily. Homodimer. The tRNA molecule binds across the dimer.

It is found in the cytoplasm. The catalysed reaction is tRNA(Ser) + L-serine + ATP = L-seryl-tRNA(Ser) + AMP + diphosphate + H(+). The enzyme catalyses tRNA(Sec) + L-serine + ATP = L-seryl-tRNA(Sec) + AMP + diphosphate + H(+). It functions in the pathway aminoacyl-tRNA biosynthesis; selenocysteinyl-tRNA(Sec) biosynthesis; L-seryl-tRNA(Sec) from L-serine and tRNA(Sec): step 1/1. Catalyzes the attachment of serine to tRNA(Ser). Is also able to aminoacylate tRNA(Sec) with serine, to form the misacylated tRNA L-seryl-tRNA(Sec), which will be further converted into selenocysteinyl-tRNA(Sec). The chain is Serine--tRNA ligase from Brucella abortus (strain S19).